Here is a 93-residue protein sequence, read N- to C-terminus: Phosphoribosyl-ATP pyrophosphatase (93 aa).

It belongs to the PRA-PH family.

It localises to the cytoplasm. It catalyses the reaction 1-(5-phospho-beta-D-ribosyl)-ATP + H2O = 1-(5-phospho-beta-D-ribosyl)-5'-AMP + diphosphate + H(+). It functions in the pathway amino-acid biosynthesis; L-histidine biosynthesis; L-histidine from 5-phospho-alpha-D-ribose 1-diphosphate: step 2/9. The sequence is that of Phosphoribosyl-ATP pyrophosphatase from Mycolicibacterium vanbaalenii (strain DSM 7251 / JCM 13017 / BCRC 16820 / KCTC 9966 / NRRL B-24157 / PYR-1) (Mycobacterium vanbaalenii).